We begin with the raw amino-acid sequence, 171 residues long: 3-hydroxydecanoyl-[acyl-carrier-protein] dehydratase (171 aa).

H70 is an active-site residue.

The protein belongs to the thioester dehydratase family. FabA subfamily. As to quaternary structure, homodimer.

It is found in the cytoplasm. The catalysed reaction is a (3R)-hydroxyacyl-[ACP] = a (2E)-enoyl-[ACP] + H2O. It catalyses the reaction (3R)-hydroxydecanoyl-[ACP] = (2E)-decenoyl-[ACP] + H2O. The enzyme catalyses (2E)-decenoyl-[ACP] = (3Z)-decenoyl-[ACP]. It participates in lipid metabolism; fatty acid biosynthesis. Functionally, necessary for the introduction of cis unsaturation into fatty acids. Catalyzes the dehydration of (3R)-3-hydroxydecanoyl-ACP to E-(2)-decenoyl-ACP and then its isomerization to Z-(3)-decenoyl-ACP. Can catalyze the dehydratase reaction for beta-hydroxyacyl-ACPs with saturated chain lengths up to 16:0, being most active on intermediate chain length. In Shewanella sp. (strain ANA-3), this protein is 3-hydroxydecanoyl-[acyl-carrier-protein] dehydratase.